The chain runs to 506 residues: Histidine ammonia-lyase (506 aa).

The 5-imidazolinone (Ala-Gly) cross-link spans 143 to 145; it reads ASG. A 2,3-didehydroalanine (Ser) modification is found at serine 144.

The protein belongs to the PAL/histidase family. Contains an active site 4-methylidene-imidazol-5-one (MIO), which is formed autocatalytically by cyclization and dehydration of residues Ala-Ser-Gly.

It localises to the cytoplasm. It catalyses the reaction L-histidine = trans-urocanate + NH4(+). The protein operates within amino-acid degradation; L-histidine degradation into L-glutamate; N-formimidoyl-L-glutamate from L-histidine: step 1/3. The polypeptide is Histidine ammonia-lyase (Salmonella agona (strain SL483)).